Reading from the N-terminus, the 334-residue chain is HTH-type transcriptional repressor PurR (334 aa).

In terms of domain architecture, HTH lacI-type spans A2–V56. The segment at residues I4 to N23 is a DNA-binding region (H-T-H motif). A DNA-binding region spans residues S48–V56. Positions 73, 189, 191, 220, and 274 each coordinate hypoxanthine.

As to quaternary structure, homodimer.

Its pathway is purine metabolism; purine nucleotide biosynthesis [regulation]. Functionally, is the main repressor of the genes involved in the de novo synthesis of purine nucleotides, regulating purB, purC, purEK, purF, purHD, purL, purMN and guaBA expression. PurR is allosterically activated to bind its cognate DNA by binding the purine corepressors, hypoxanthine or guanine, thereby effecting transcription repression. This Mannheimia succiniciproducens (strain KCTC 0769BP / MBEL55E) protein is HTH-type transcriptional repressor PurR.